Consider the following 227-residue polypeptide: Ribonuclease 3 (227 aa).

One can recognise an RNase III domain in the interval 7–132; that stretch reads LTAFMDRLGY…VIAAVYLDGG (126 aa). Mg(2+) is bound at residue Glu45. The active site involves Asp49. Residues Asp118 and Glu121 each coordinate Mg(2+). Residue Glu121 is part of the active site. The region spanning 157–226 is the DRBM domain; that stretch reads DAKTALQEWA…AKDLLAQLAG (70 aa).

This sequence belongs to the ribonuclease III family. As to quaternary structure, homodimer. Mg(2+) serves as cofactor.

It is found in the cytoplasm. The enzyme catalyses Endonucleolytic cleavage to 5'-phosphomonoester.. In terms of biological role, digests double-stranded RNA. Involved in the processing of primary rRNA transcript to yield the immediate precursors to the large and small rRNAs (23S and 16S). Processes some mRNAs, and tRNAs when they are encoded in the rRNA operon. Processes pre-crRNA and tracrRNA of type II CRISPR loci if present in the organism. The chain is Ribonuclease 3 from Jannaschia sp. (strain CCS1).